The following is a 130-amino-acid chain: MDPIADYLTKIRNAIKAKHRVVEVPASNIKKEITKVLFDKGYIQSYKFEESAVQGSIKIALKYHPLTKESAIVKIERISKPGLRKYTHAETMPRVLNGLGVAIVSTSKGIMSDKEAKNLNIGGEVLCFVY.

This sequence belongs to the universal ribosomal protein uS8 family. Part of the 30S ribosomal subunit. Contacts proteins S5 and S12.

In terms of biological role, one of the primary rRNA binding proteins, it binds directly to 16S rRNA central domain where it helps coordinate assembly of the platform of the 30S subunit. This is Small ribosomal subunit protein uS8 from Cytophaga hutchinsonii (strain ATCC 33406 / DSM 1761 / CIP 103989 / NBRC 15051 / NCIMB 9469 / D465).